Reading from the N-terminus, the 420-residue chain is ATP phosphoribosyltransferase regulatory subunit (420 aa).

It belongs to the class-II aminoacyl-tRNA synthetase family. HisZ subfamily. Heteromultimer composed of HisG and HisZ subunits.

It is found in the cytoplasm. It participates in amino-acid biosynthesis; L-histidine biosynthesis; L-histidine from 5-phospho-alpha-D-ribose 1-diphosphate: step 1/9. Functionally, required for the first step of histidine biosynthesis. May allow the feedback regulation of ATP phosphoribosyltransferase activity by histidine. The protein is ATP phosphoribosyltransferase regulatory subunit of Bacillus anthracis (strain A0248).